A 250-amino-acid chain; its full sequence is 2,3-bisphosphoglycerate-dependent phosphoglycerate mutase (250 aa).

Substrate contacts are provided by residues 10 to 17 (RHGESQWN), 23 to 24 (TG), R62, 89 to 92 (ERHY), K100, 116 to 117 (RR), and 185 to 186 (GN). H11 acts as the Tele-phosphohistidine intermediate in catalysis. E89 functions as the Proton donor/acceptor in the catalytic mechanism.

This sequence belongs to the phosphoglycerate mutase family. BPG-dependent PGAM subfamily. In terms of assembly, homodimer.

The catalysed reaction is (2R)-2-phosphoglycerate = (2R)-3-phosphoglycerate. It participates in carbohydrate degradation; glycolysis; pyruvate from D-glyceraldehyde 3-phosphate: step 3/5. Its function is as follows. Catalyzes the interconversion of 2-phosphoglycerate and 3-phosphoglycerate. The sequence is that of 2,3-bisphosphoglycerate-dependent phosphoglycerate mutase from Sodalis glossinidius (strain morsitans).